The chain runs to 382 residues: Alkanesulfonate monooxygenase (382 aa).

It belongs to the SsuD family.

It catalyses the reaction an alkanesulfonate + FMNH2 + O2 = an aldehyde + FMN + sulfite + H2O + 2 H(+). In terms of biological role, catalyzes the desulfonation of aliphatic sulfonates. The protein is Alkanesulfonate monooxygenase of Ectopseudomonas mendocina (strain ymp) (Pseudomonas mendocina).